The chain runs to 928 residues: ATP-dependent DNA helicase PIF5 (928 aa).

Residues 1–49 (MLSRLSAVWRPSRVALRIQRVDFTTCGNRLNRSTQPNEPPLVSGIAARS) constitute a mitochondrion transit peptide. 2 disordered regions span residues 29-141 (RLNR…DVAI) and 176-231 (LRAK…FSDA). Residues 52–61 (AKAEPVEKRG) are compositionally biased toward basic and acidic residues. Residue 264 to 271 (GGAGSGKS) coordinates ATP. 4 disordered regions span residues 389–421 (PIPP…APSK), 481–513 (KSSA…AAAE), 545–572 (IYPS…EDTM), and 585–607 (STHE…SQPW). Over residues 550–566 (NDGSSQQTGSSNGANSV) the composition is skewed to polar residues. Residues 858 to 877 (QAYVALSRSTRLDNIRLLDF) mediate DNA binding. The segment at 898–928 (EELDNEIEDDGTEGDEEALEGDGEYEGEVEE) is disordered.

The protein belongs to the helicase family. PIF1 subfamily. As to quaternary structure, monomer. Mg(2+) serves as cofactor.

Its subcellular location is the mitochondrion. It carries out the reaction Couples ATP hydrolysis with the unwinding of duplex DNA at the replication fork by translocating in the 5'-3' direction. This creates two antiparallel DNA single strands (ssDNA). The leading ssDNA polymer is the template for DNA polymerase III holoenzyme which synthesizes a continuous strand.. The catalysed reaction is ATP + H2O = ADP + phosphate + H(+). Its function is as follows. DNA-dependent ATPase and 5'-3' DNA helicase required for the maintenance of mitochondrial (kinetoplast) genome stability. Involved in processing of minicircle Okazaki fragments. The protein is ATP-dependent DNA helicase PIF5 of Trypanosoma brucei brucei (strain 927/4 GUTat10.1).